A 310-amino-acid chain; its full sequence is MSKPIEIEIRRAPVLGSSMAYRETGAQDAPVVLFLHGNPTSSHIWRNILPLVSPVAHCIAPDLIGFGQSGKPDIAYRFFDHVRYLDAFIEQRGVTSAYLVAQDWGTALAFHLAARRPDFVRGLAFMEFIRPMPTWQDFHHTEVAEEQDHAEAARAVFRKFRTPGEGEAMILEANAFVERVLPGGIVRKLGDEEMAPYRTPFPTPESRRPVLAFPRELPIAGEPADVYEALQSAHAALAASSYPKLLFTGEPGALVSPEFAERFAASLTRCALIRLGAGLHYLQEDHADAIGRSVAGWIAGIEAVRPQLAA.

The AB hydrolase-1 domain occupies 30–140; sequence PVVLFLHGNP…PMPTWQDFHH (111 aa). The active-site Nucleophile is the Asp103. Glu127 acts as the Proton donor in catalysis. The Proton acceptor role is filled by His280.

This sequence belongs to the haloalkane dehalogenase family. Type 2 subfamily. As to quaternary structure, monomer.

The catalysed reaction is 1-haloalkane + H2O = a halide anion + a primary alcohol + H(+). Functionally, catalyzes hydrolytic cleavage of carbon-halogen bonds in halogenated aliphatic compounds, leading to the formation of the corresponding primary alcohols, halide ions and protons. In Bradyrhizobium diazoefficiens (strain JCM 10833 / BCRC 13528 / IAM 13628 / NBRC 14792 / USDA 110), this protein is Haloalkane dehalogenase.